The chain runs to 490 residues: Aspartyl/glutamyl-tRNA(Asn/Gln) amidotransferase subunit B (490 aa).

The protein belongs to the GatB/GatE family. GatB subfamily. In terms of assembly, heterotrimer of A, B and C subunits.

It carries out the reaction L-glutamyl-tRNA(Gln) + L-glutamine + ATP + H2O = L-glutaminyl-tRNA(Gln) + L-glutamate + ADP + phosphate + H(+). The enzyme catalyses L-aspartyl-tRNA(Asn) + L-glutamine + ATP + H2O = L-asparaginyl-tRNA(Asn) + L-glutamate + ADP + phosphate + 2 H(+). Allows the formation of correctly charged Asn-tRNA(Asn) or Gln-tRNA(Gln) through the transamidation of misacylated Asp-tRNA(Asn) or Glu-tRNA(Gln) in organisms which lack either or both of asparaginyl-tRNA or glutaminyl-tRNA synthetases. The reaction takes place in the presence of glutamine and ATP through an activated phospho-Asp-tRNA(Asn) or phospho-Glu-tRNA(Gln). This Burkholderia pseudomallei (strain K96243) protein is Aspartyl/glutamyl-tRNA(Asn/Gln) amidotransferase subunit B.